The sequence spans 946 residues: Bifunctional glutamine synthetase adenylyltransferase/adenylyl-removing enzyme (946 aa).

The segment at 1–440 (MKPLSSPLQQ…VFNELIGDDE (440 aa)) is adenylyl removase. The adenylyl transferase stretch occupies residues 449-946 (SEQWRELWQD…ASWQKWLVEE (498 aa)).

The protein belongs to the GlnE family. Mg(2+) is required as a cofactor.

It carries out the reaction [glutamine synthetase]-O(4)-(5'-adenylyl)-L-tyrosine + phosphate = [glutamine synthetase]-L-tyrosine + ADP. The enzyme catalyses [glutamine synthetase]-L-tyrosine + ATP = [glutamine synthetase]-O(4)-(5'-adenylyl)-L-tyrosine + diphosphate. In terms of biological role, involved in the regulation of glutamine synthetase GlnA, a key enzyme in the process to assimilate ammonia. When cellular nitrogen levels are high, the C-terminal adenylyl transferase (AT) inactivates GlnA by covalent transfer of an adenylyl group from ATP to specific tyrosine residue of GlnA, thus reducing its activity. Conversely, when nitrogen levels are low, the N-terminal adenylyl removase (AR) activates GlnA by removing the adenylyl group by phosphorolysis, increasing its activity. The regulatory region of GlnE binds the signal transduction protein PII (GlnB) which indicates the nitrogen status of the cell. The sequence is that of Bifunctional glutamine synthetase adenylyltransferase/adenylyl-removing enzyme from Escherichia coli (strain SE11).